The following is a 502-amino-acid chain: Ubiquitin-associated protein 1 (502 aa).

Positions 1–95 are interaction with ESCRT-I; the sequence is MASKKLGADF…AEAKVNSKSG (95 aa). Positions 17–63 constitute a UMA domain; sequence LDDVPFKTGDKFKTPAKVGLPIGFSLPDCLQVVREVQYDFSLEKKTI. The segment covering 86–100 has biased composition (basic and acidic residues); sequence AEAKVNSKSGPEGDS. Residues 86–117 are disordered; that stretch reads AEAKVNSKSGPEGDSKMSFSKTHSTATMPPPI. Positions 102–112 are enriched in polar residues; sequence MSFSKTHSTAT. 3 positions are modified to phosphoserine: S146, S205, and S289. The interval 260-290 is interaction with PTPN23; that stretch reads VSNIKSLSFPKLDSDDSNQKTAKLASTFHST. UBA domains follow at residues 389-430 and 451-498; these read SPSE…LFAH and QCSE…LMAR.

Component of an ESCRT-I complex (endosomal sorting complex required for transport I) which consists of TSG101, VPS28, VPS37A and UBAP1 in a 1:1:1:1 stoichiometry. Interacts with PTPN23. Interacts (via UBA domains) with ubiquitinated proteins. As to expression, ubiquitous. Highly expressed in heart, brain, placenta, lung, liver, skeletal muscle and pancreas.

Its subcellular location is the cytoplasm. It localises to the cytosol. It is found in the endosome. Functionally, component of the ESCRT-I complex, a regulator of vesicular trafficking process. Binds to ubiquitinated cargo proteins and is required for the sorting of endocytic ubiquitinated cargos into multivesicular bodies (MVBs). Plays a role in the proteasomal degradation of ubiquitinated cell-surface proteins, such as EGFR and BST2. The polypeptide is Ubiquitin-associated protein 1 (Homo sapiens (Human)).